A 70-amino-acid chain; its full sequence is Small ribosomal subunit protein bS21 (70 aa).

It belongs to the bacterial ribosomal protein bS21 family.

The chain is Small ribosomal subunit protein bS21 from Wolinella succinogenes (strain ATCC 29543 / DSM 1740 / CCUG 13145 / JCM 31913 / LMG 7466 / NCTC 11488 / FDC 602W) (Vibrio succinogenes).